The chain runs to 358 residues: Peptide chain release factor 1 (358 aa).

Gln-233 is subject to N5-methylglutamine.

This sequence belongs to the prokaryotic/mitochondrial release factor family. In terms of processing, methylated by PrmC. Methylation increases the termination efficiency of RF1.

Its subcellular location is the cytoplasm. Its function is as follows. Peptide chain release factor 1 directs the termination of translation in response to the peptide chain termination codons UAG and UAA. The chain is Peptide chain release factor 1 from Lysinibacillus sphaericus (strain C3-41).